We begin with the raw amino-acid sequence, 259 residues long: Pyrroloquinoline-quinone synthase (259 aa).

This sequence belongs to the PqqC family.

It carries out the reaction 6-(2-amino-2-carboxyethyl)-7,8-dioxo-1,2,3,4,7,8-hexahydroquinoline-2,4-dicarboxylate + 3 O2 = pyrroloquinoline quinone + 2 H2O2 + 2 H2O + H(+). It participates in cofactor biosynthesis; pyrroloquinoline quinone biosynthesis. In terms of biological role, ring cyclization and eight-electron oxidation of 3a-(2-amino-2-carboxyethyl)-4,5-dioxo-4,5,6,7,8,9-hexahydroquinoline-7,9-dicarboxylic-acid to PQQ. This chain is Pyrroloquinoline-quinone synthase, found in Bradyrhizobium diazoefficiens (strain JCM 10833 / BCRC 13528 / IAM 13628 / NBRC 14792 / USDA 110).